A 304-amino-acid chain; its full sequence is uncharacterized protein (304 aa).

Residues 1 to 10 (MLWAHRKKRK) show a composition bias toward basic residues. The segment at 1–28 (MLWAHRKKRKAATETTEDKPLESHRAND) is disordered. Residues 16-27 (TEDKPLESHRAN) show a composition bias toward basic and acidic residues. The residue at position 39 (Ser-39) is a Phosphoserine. The segment covering 91-101 (KQKISGSSMTK) has biased composition (polar residues). Disordered stretches follow at residues 91-115 (KQKISGSSMTKEMQRESGKSPSMED), 138-160 (SMLQRSTTHRRKGHAESRNISPE), and 190-304 (SHTV…IYGS). The span at 151–160 (HAESRNISPE) shows a compositional bias: basic and acidic residues. The residue at position 158 (Ser-158) is a Phosphoserine. The span at 195–206 (SQSRHSNQSHHS) shows a compositional bias: low complexity. Residues 208 to 223 (PSHQSNQSHPVYSSYQ) are compositionally biased toward polar residues. Over residues 229–248 (HLSPQSYPSYSSHQSHPGHS) the composition is skewed to low complexity. The segment covering 249-263 (NHQGHSGLSSHQTHL) has biased composition (polar residues). Residues 264 to 292 (GHSNHQGHPGHSSHQSHQGQPGHPSHQSH) show a composition bias toward low complexity.

This is an uncharacterized protein from Mus musculus (Mouse).